The primary structure comprises 526 residues: Beta,beta-carotene 15,15'-dioxygenase (526 aa).

Fe cation contacts are provided by histidine 172, histidine 236, histidine 307, and histidine 512.

This sequence belongs to the carotenoid oxygenase family. Requires Fe(2+) as cofactor.

The protein localises to the cytoplasm. It localises to the cytosol. The catalysed reaction is all-trans-beta-carotene + O2 = 2 all-trans-retinal. The protein operates within cofactor metabolism; retinol metabolism. In terms of biological role, symmetrically cleaves beta-carotene into two molecules of retinal using a dioxygenase mechanism. The protein is Beta,beta-carotene 15,15'-dioxygenase of Gallus gallus (Chicken).